We begin with the raw amino-acid sequence, 335 residues long: MATVPTALAGRHFLKELDFTAEEFRGLLELAAELKAAKKARTETLYLRGRNIALVFEKTSTRTRCAFEVAAADQGASTTYLDPAGSQIGHKESVKDTARVLGRMFDGIEYRGHGQGVVEELAAHAGVPVYNGLTDEWHPTQMLADALTMTEHSDKPLTEIAYAYLGDARYNMGNSYLVTGALLGMDVRIVAPRLLWPDETIVEVAQQLAVASGARITLTEDVKEGVRGADFVATDVWVSMGEPKEVWDERIGLLGPYAVTMDVLRATGNDDVKFLHCLPAFHDLGTDIGREIHARHGLTSLEVTDEVFESAHSVVFDEAENRMHTIKAVLVATLA.

Carbamoyl phosphate contacts are provided by residues 60–63, Q87, R111, and 138–141; these read STRT and HPTQ. L-ornithine contacts are provided by residues N171, D235, and 239–240; that span reads SM. Carbamoyl phosphate-binding positions include 277 to 278 and R322; that span reads CL.

Belongs to the aspartate/ornithine carbamoyltransferase superfamily. OTCase family.

It is found in the cytoplasm. The enzyme catalyses carbamoyl phosphate + L-ornithine = L-citrulline + phosphate + H(+). It participates in amino-acid biosynthesis; L-arginine biosynthesis; L-arginine from L-ornithine and carbamoyl phosphate: step 1/3. Functionally, reversibly catalyzes the transfer of the carbamoyl group from carbamoyl phosphate (CP) to the N(epsilon) atom of ornithine (ORN) to produce L-citrulline. This chain is Ornithine carbamoyltransferase, found in Streptomyces avermitilis (strain ATCC 31267 / DSM 46492 / JCM 5070 / NBRC 14893 / NCIMB 12804 / NRRL 8165 / MA-4680).